The following is a 326-amino-acid chain: DNA-binding death effector domain-containing protein 2 (326 aa).

In terms of domain architecture, DED spans 25–104 (SLHRMFEVVG…RHDLLPHLAR (80 aa)). Positions 104 to 109 (RKRRRP) match the Nuclear localization signal motif. The segment at 104–194 (RKRRRPVSPE…PARPSSEGKV (91 aa)) is disordered. Residues 136 to 146 (SSSSANSQQGQ) are compositionally biased toward low complexity. The short motif at 155–173 (KRQRRSRGRPSGGARRRRR) is the Bipartite nuclear localization signal element. Over residues 155 to 174 (KRQRRSRGRPSGGARRRRRG) the composition is skewed to basic residues. Low complexity predominate over residues 175–191 (APAAPQQQSEPARPSSE).

In terms of assembly, interacts with CASP8, CASP10 and GTF3C3. Homodimerizes and heterodimerizes with DEDD. Expressed in most tissues. High levels were found in liver, kidney, heart, ovary, spleen, testes, skeletal muscle and peripheral blood leukocytes. Expression was absent or low in colon and small intestine. Expression is relatively high in the tumor cell lines chronic myologenous leukemia K-562 and the colorectal adenocarcinoma SW480. Expression is moderate in the cervical carcinoma HeLa, the Burkitt's lymphoma Raji, the lung carcinoma A-549, and the melanoma G-361. In contrast, two leukemia cell lines, HL-60 (promyelocytic leukemia) and MOLT-4 (lymphoblastic leukemia), show relatively low levels.

It is found in the nucleus. The protein localises to the nucleolus. Functionally, may play a critical role in death receptor-induced apoptosis and may target CASP8 and CASP10 to the nucleus. May regulate degradation of intermediate filaments during apoptosis. May play a role in the general transcription machinery in the nucleus and might be an important regulator of the activity of GTF3C3. This chain is DNA-binding death effector domain-containing protein 2 (DEDD2), found in Homo sapiens (Human).